A 931-amino-acid polypeptide reads, in one-letter code: Protein translocase subunit SecA (931 aa).

ATP-binding positions include Gln87, 105-109, and Asp523; that span reads GEGKT. Zn(2+) contacts are provided by Cys915, Cys917, Cys926, and His927.

The protein belongs to the SecA family. As to quaternary structure, monomer and homodimer. Part of the essential Sec protein translocation apparatus which comprises SecA, SecYEG and auxiliary proteins SecDF-YajC and YidC. Requires Zn(2+) as cofactor.

It localises to the cell inner membrane. It is found in the cytoplasm. The enzyme catalyses ATP + H2O + cellular proteinSide 1 = ADP + phosphate + cellular proteinSide 2.. Its function is as follows. Part of the Sec protein translocase complex. Interacts with the SecYEG preprotein conducting channel. Has a central role in coupling the hydrolysis of ATP to the transfer of proteins into and across the cell membrane, serving both as a receptor for the preprotein-SecB complex and as an ATP-driven molecular motor driving the stepwise translocation of polypeptide chains across the membrane. This Xanthobacter autotrophicus (strain ATCC BAA-1158 / Py2) protein is Protein translocase subunit SecA.